A 202-amino-acid chain; its full sequence is LexA repressor 2 (202 aa).

The H-T-H motif DNA-binding region spans 28 to 48 (LADIATRFGFASRSVARKHIT). Catalysis depends on for autocatalytic cleavage activity residues serine 123 and lysine 160.

It belongs to the peptidase S24 family. As to quaternary structure, homodimer.

It catalyses the reaction Hydrolysis of Ala-|-Gly bond in repressor LexA.. Its function is as follows. Represses a number of genes involved in the response to DNA damage (SOS response), including recA and lexA. In the presence of single-stranded DNA, RecA interacts with LexA causing an autocatalytic cleavage which disrupts the DNA-binding part of LexA, leading to derepression of the SOS regulon and eventually DNA repair. The protein is LexA repressor 2 of Pseudomonas putida (strain ATCC 47054 / DSM 6125 / CFBP 8728 / NCIMB 11950 / KT2440).